The following is a 308-amino-acid chain: Tetraacyldisaccharide 4'-kinase (308 aa).

An ATP-binding site is contributed by 63-70; the sequence is SFGGNGKT.

It belongs to the LpxK family.

It catalyses the reaction a lipid A disaccharide + ATP = a lipid IVA + ADP + H(+). Its pathway is glycolipid biosynthesis; lipid IV(A) biosynthesis; lipid IV(A) from (3R)-3-hydroxytetradecanoyl-[acyl-carrier-protein] and UDP-N-acetyl-alpha-D-glucosamine: step 6/6. In terms of biological role, transfers the gamma-phosphate of ATP to the 4'-position of a tetraacyldisaccharide 1-phosphate intermediate (termed DS-1-P) to form tetraacyldisaccharide 1,4'-bis-phosphate (lipid IVA). The protein is Tetraacyldisaccharide 4'-kinase of Campylobacter jejuni subsp. jejuni serotype O:2 (strain ATCC 700819 / NCTC 11168).